The chain runs to 430 residues: tRNA(Ile)-lysidine synthase (430 aa).

Residue 21–26 participates in ATP binding; it reads SGGLDS.

The protein belongs to the tRNA(Ile)-lysidine synthase family.

It is found in the cytoplasm. The enzyme catalyses cytidine(34) in tRNA(Ile2) + L-lysine + ATP = lysidine(34) in tRNA(Ile2) + AMP + diphosphate + H(+). Ligates lysine onto the cytidine present at position 34 of the AUA codon-specific tRNA(Ile) that contains the anticodon CAU, in an ATP-dependent manner. Cytidine is converted to lysidine, thus changing the amino acid specificity of the tRNA from methionine to isoleucine. The protein is tRNA(Ile)-lysidine synthase of Salmonella choleraesuis (strain SC-B67).